Reading from the N-terminus, the 354-residue chain is Small ribosomal subunit biogenesis GTPase RsgA (354 aa).

Positions 1 to 46 (MSKKKPLSQGQLRRMRANHEKRLNRDSGDKNTPELQDSSLGPEQSG) are disordered. The segment covering 17-32 (ANHEKRLNRDSGDKNT) has biased composition (basic and acidic residues). Polar residues predominate over residues 33–46 (PELQDSSLGPEQSG). Positions 108–276 (HSSLSRPDLY…LIDSPGVREF (169 aa)) constitute a CP-type G domain. GTP-binding positions include 164–167 (NKID) and 218–226 (GQSGVGKSS). Zn(2+) is bound by residues C300, C305, H307, and C313.

This sequence belongs to the TRAFAC class YlqF/YawG GTPase family. RsgA subfamily. In terms of assembly, monomer. Associates with 30S ribosomal subunit, binds 16S rRNA. Zn(2+) serves as cofactor.

The protein resides in the cytoplasm. One of several proteins that assist in the late maturation steps of the functional core of the 30S ribosomal subunit. Helps release RbfA from mature subunits. May play a role in the assembly of ribosomal proteins into the subunit. Circularly permuted GTPase that catalyzes slow GTP hydrolysis, GTPase activity is stimulated by the 30S ribosomal subunit. The chain is Small ribosomal subunit biogenesis GTPase RsgA from Shewanella oneidensis (strain ATCC 700550 / JCM 31522 / CIP 106686 / LMG 19005 / NCIMB 14063 / MR-1).